A 236-amino-acid polypeptide reads, in one-letter code: 2,3,4,5-tetrahydropyridine-2,6-dicarboxylate N-acetyltransferase (236 aa).

This sequence belongs to the transferase hexapeptide repeat family. DapH subfamily.

It catalyses the reaction (S)-2,3,4,5-tetrahydrodipicolinate + acetyl-CoA + H2O = L-2-acetamido-6-oxoheptanedioate + CoA. It participates in amino-acid biosynthesis; L-lysine biosynthesis via DAP pathway; LL-2,6-diaminopimelate from (S)-tetrahydrodipicolinate (acetylase route): step 1/3. Functionally, catalyzes the transfer of an acetyl group from acetyl-CoA to tetrahydrodipicolinate. This Clostridium botulinum (strain 657 / Type Ba4) protein is 2,3,4,5-tetrahydropyridine-2,6-dicarboxylate N-acetyltransferase.